The sequence spans 252 residues: Small ribosomal subunit protein eS4 (252 aa).

The region spanning 43–105 (FPLLIIVRDI…TGETYRVIPV (63 aa)) is the S4 RNA-binding domain.

It belongs to the eukaryotic ribosomal protein eS4 family.

The chain is Small ribosomal subunit protein eS4 from Staphylothermus marinus (strain ATCC 43588 / DSM 3639 / JCM 9404 / F1).